A 426-amino-acid chain; its full sequence is Enolase (426 aa).

Residue Gln163 participates in (2R)-2-phosphoglycerate binding. Catalysis depends on Glu205, which acts as the Proton donor. Residues Asp242, Glu286, and Asp313 each contribute to the Mg(2+) site. (2R)-2-phosphoglycerate-binding residues include Lys338, Arg367, Ser368, and Lys389. The active-site Proton acceptor is the Lys338.

This sequence belongs to the enolase family. The cofactor is Mg(2+).

The protein resides in the cytoplasm. It is found in the secreted. The protein localises to the cell surface. It carries out the reaction (2R)-2-phosphoglycerate = phosphoenolpyruvate + H2O. It participates in carbohydrate degradation; glycolysis; pyruvate from D-glyceraldehyde 3-phosphate: step 4/5. Catalyzes the reversible conversion of 2-phosphoglycerate (2-PG) into phosphoenolpyruvate (PEP). It is essential for the degradation of carbohydrates via glycolysis. In Syntrophobacter fumaroxidans (strain DSM 10017 / MPOB), this protein is Enolase.